The chain runs to 354 residues: Uroporphyrinogen decarboxylase (354 aa).

Substrate is bound by residues 25 to 29 (RQAGR), Phe44, Asp75, Tyr152, Thr207, and His330.

This sequence belongs to the uroporphyrinogen decarboxylase family. As to quaternary structure, homodimer.

It is found in the cytoplasm. The enzyme catalyses uroporphyrinogen III + 4 H(+) = coproporphyrinogen III + 4 CO2. Its pathway is porphyrin-containing compound metabolism; protoporphyrin-IX biosynthesis; coproporphyrinogen-III from 5-aminolevulinate: step 4/4. Catalyzes the decarboxylation of four acetate groups of uroporphyrinogen-III to yield coproporphyrinogen-III. This is Uroporphyrinogen decarboxylase from Xylella fastidiosa (strain Temecula1 / ATCC 700964).